The primary structure comprises 276 residues: Elongation factor Ts (276 aa).

The tract at residues 81–84 (TDFV) is involved in Mg(2+) ion dislocation from EF-Tu.

It belongs to the EF-Ts family.

It localises to the cytoplasm. In terms of biological role, associates with the EF-Tu.GDP complex and induces the exchange of GDP to GTP. It remains bound to the aminoacyl-tRNA.EF-Tu.GTP complex up to the GTP hydrolysis stage on the ribosome. This Leifsonia xyli subsp. xyli (strain CTCB07) protein is Elongation factor Ts.